The sequence spans 129 residues: Large ribosomal subunit protein bL12c (129 aa).

It belongs to the bacterial ribosomal protein bL12 family. Homodimer. Part of the ribosomal stalk of the 50S ribosomal subunit. Forms a multimeric L10(L12)X complex, where L10 forms an elongated spine to which 2 to 4 L12 dimers bind in a sequential fashion. Binds GTP-bound translation factors.

The protein resides in the plastid. It is found in the chloroplast. Forms part of the ribosomal stalk which helps the ribosome interact with GTP-bound translation factors. Is thus essential for accurate translation. In Tupiella akineta (Green alga), this protein is Large ribosomal subunit protein bL12c.